The sequence spans 821 residues: MPTVISASVAPRTAAEPRSPGPVPHPAQSKATEAGGGNPSGIYSAIISRNFPIIGVKEKTFEQLHKKCLEKKVLYVDPEFPPDETSLFYSQKFPIQFVWKRPPEICENPRFIIDGANRTDICQGELGDCWFLAAIACLTLNQHLLFRVIPHDQSFIENYAGIFHFQFWRYGEWVDVVIDDCLPTYNNQLVFTKSNHRNEFWSALLEKAYAKLHGSYEALKGGNTTEAMEDFTGGVAEFFEIRDAPSDMYKIMKKAIERGSLMGCSIDDGTNMTYGTSPSGLNMGELIARMVRNMDNSLLQDSDLDPRGSDERPTRTIIPVQYETRMACGLVRGHAYSVTGLDEVPFKGEKVKLVRLRNPWGQVEWNGSWSDRWKDWSFVDKDEKARLQHQVTEDGEFWMSYEDFIYHFTKLEICNLTADALQSDKLQTWTVSVNEGRWVRGCSAGGCRNFPDTFWTNPQYRLKLLEEDDDPDDSEVICSFLVALMQKNRRKDRKLGASLFTIGFAIYEVPKEMHGNKQHLQKDFFLYNASKARSKTYINMREVSQRFRLPPSEYVIVPSTYEPHQEGEFILRVFSEKRNLSEEVENTISVDRPVKKKKTKPIIFVSDRANSNKELGVDQESEEGKGKTSPDKQKQSPQPQPGSSDQESEEQQQFRNIFKQIAGDDMEICADELKKVLNTVVNKHKDLKTHGFTLESCRSMIALMDTDGSGKLNLQEFHHLWNKIKAWQKIFKHYDTDQSGTINSYEMRNAVNDAGFHLNNQLYDIITMRYADKHMNIDFDSFICCFVRLEGMFRAFHAFDKDGDGIIKLNVLEWLQLTMYA.

The segment at 7–37 is disordered; it reads ASVAPRTAAEPRSPGPVPHPAQSKATEAGGG. Residues 74–417 enclose the Calpain catalytic domain; the sequence is LYVDPEFPPD…FTKLEICNLT (344 aa). Catalysis depends on residues Cys129, His334, and Asn358. Residues 418-586 form a domain III region; sequence ADALQSDKLQ…KRNLSEEVEN (169 aa). Residues 587–649 are linker; the sequence is TISVDRPVKK…QPGSSDQESE (63 aa). The disordered stretch occupies residues 609–652; sequence ANSNKELGVDQESEEGKGKTSPDKQKQSPQPQPGSSDQESEEQQ. Positions 622-634 are enriched in basic and acidic residues; the sequence is EEGKGKTSPDKQK. Low complexity predominate over residues 635-645; it reads QSPQPQPGSSD. 4 consecutive EF-hand domains span residues 649–683, 692–725, 722–757, and 787–821; these read EEQQQFRNIFKQIAGDDMEICADELKKVLNTVVNK, FTLESCRSMIALMDTDGSGKLNLQEFHHLWNKIK, NKIKAWQKIFKHYDTDQSGTINSYEMRNAVNDAGFH, and VRLEGMFRAFHAFDKDGDGIIKLNVLEWLQLTMYA. The tract at residues 650–821 is domain IV; the sequence is EQQQFRNIFK…LEWLQLTMYA (172 aa). The Ca(2+) site is built by Ala662, Asp665, Glu667, Glu672, Asp705, Asp707, Ser709, Lys711, Glu716, Asp735, Asp737, Ser739, Thr741, Glu746, Asp800, Asp802, Asp804, and Ile806.

The protein belongs to the peptidase C2 family. Homodimer; via EF-hand domain 4. Interacts with TTN/titin. Interacts with CMYA5; this interaction, which results in CMYA5 proteolysis, may protect CAPN3 from autolysis. Interacts with SIMC1. Interacts with UTP25; the interaction is required for CAPN3 translocation to the nucleolus. Isoform I is skeletal muscle specific.

The protein localises to the cytoplasm. It is found in the nucleus. Its subcellular location is the nucleolus. It carries out the reaction Broad endopeptidase activity.. Activated by micromolar concentrations of calcium and inhibited by calpastatin. Functionally, calcium-regulated non-lysosomal thiol-protease. Proteolytically cleaves CTBP1 at 'His-409'. Mediates, with UTP25, the proteasome-independent degradation of p53/TP53. The polypeptide is Calpain-3 (Homo sapiens (Human)).